Consider the following 280-residue polypeptide: Ataxin-3 homolog (280 aa).

In terms of domain architecture, Josephin spans 7 to 187 (GGMLYHEVQE…QECPMSSSSE (181 aa)). Cys-20 serves as the catalytic Nucleophile. The active-site Proton acceptor is the His-126. Asp-141 is a catalytic residue. Composition is skewed to polar residues over residues 183-194 (SSSSEASNSFGQ) and 221-232 (DNVNQQRRNQAL). The segment at 183 to 240 (SSSSEASNSFGQWLSPEDAERIRKNTSSGSSARNKRSNDNVNQQRRNQALSREEVQAF) is disordered. Positions 243–262 (MEDDDLKAAIAASLLDASAA) constitute a UIM domain.

The protein localises to the nucleus. The enzyme catalyses Thiol-dependent hydrolysis of ester, thioester, amide, peptide and isopeptide bonds formed by the C-terminal Gly of ubiquitin (a 76-residue protein attached to proteins as an intracellular targeting signal).. Its function is as follows. Interacts with key regulators of transcription and represses transcription. Acts as a histone-binding protein that regulates transcription. Acts as a deubiquitinating enzyme. This Arabidopsis thaliana (Mouse-ear cress) protein is Ataxin-3 homolog.